Reading from the N-terminus, the 156-residue chain is ATP synthase subunit b (156 aa).

The helical transmembrane segment at 12–32 (VAFFIFVLFCMKYVWPPVIAA) threads the bilayer.

Belongs to the ATPase B chain family. As to quaternary structure, F-type ATPases have 2 components, F(1) - the catalytic core - and F(0) - the membrane proton channel. F(1) has five subunits: alpha(3), beta(3), gamma(1), delta(1), epsilon(1). F(0) has three main subunits: a(1), b(2) and c(10-14). The alpha and beta chains form an alternating ring which encloses part of the gamma chain. F(1) is attached to F(0) by a central stalk formed by the gamma and epsilon chains, while a peripheral stalk is formed by the delta and b chains.

It is found in the cell inner membrane. F(1)F(0) ATP synthase produces ATP from ADP in the presence of a proton or sodium gradient. F-type ATPases consist of two structural domains, F(1) containing the extramembraneous catalytic core and F(0) containing the membrane proton channel, linked together by a central stalk and a peripheral stalk. During catalysis, ATP synthesis in the catalytic domain of F(1) is coupled via a rotary mechanism of the central stalk subunits to proton translocation. Functionally, component of the F(0) channel, it forms part of the peripheral stalk, linking F(1) to F(0). The sequence is that of ATP synthase subunit b from Pseudomonas syringae pv. tomato (strain ATCC BAA-871 / DC3000).